A 66-amino-acid polypeptide reads, in one-letter code: Large ribosomal subunit protein bL35c (66 aa).

This sequence belongs to the bacterial ribosomal protein bL35 family.

It is found in the plastid. The protein resides in the chloroplast. This is Large ribosomal subunit protein bL35c from Gracilaria tenuistipitata var. liui (Red alga).